A 347-amino-acid polypeptide reads, in one-letter code: Haptoglobin (347 aa).

The N-terminal stretch at 1-18 is a signal peptide; the sequence is MRALGAVVTLLLWGQLFA. One can recognise a Sushi domain in the interval 31–88; sequence DSCPKPPEIANGYVEHLVRYRCRQFYRLRAEGDGVYTLNDEKQWMNTVAGEKLPECEA. Intrachain disulfides connect Cys52/Cys86, Cys90/Cys207, Cys250/Cys281, and Cys292/Cys322. Positions 103–345 constitute a Peptidase S1 domain; it reads IIGGSMDAKG…LKDWVQETMA (243 aa). N-linked (GlcNAc...) asparagine glycans are attached at residues Asn148, Asn182, and Asn264. An interaction with CD163 region spans residues 259-264; sequence VPEKKN.

The protein belongs to the peptidase S1 family. Tetramer of two alpha and two beta chains; disulfide-linked. The hemoglobin/haptoglobin complex is composed of a haptoglobin dimer bound to two hemoglobin alpha-beta dimers. Interacts with CD163. Interacts with ERGIC3. As to expression, expressed by the liver and secreted in plasma.

It is found in the secreted. As a result of hemolysis, hemoglobin is found to accumulate in the kidney and is secreted in the urine. Haptoglobin captures, and combines with free plasma hemoglobin to allow hepatic recycling of heme iron and to prevent kidney damage. Haptoglobin also acts as an antioxidant, has antibacterial activity and plays a role in modulating many aspects of the acute phase response. Hemoglobin/haptoglobin complexes are rapidly cleared by the macrophage CD163 scavenger receptor expressed on the surface of liver Kupfer cells through an endocytic lysosomal degradation pathway. This Mus caroli (Ryukyu mouse) protein is Haptoglobin (Hp).